Here is a 281-residue protein sequence, read N- to C-terminus: Acyl-[acyl-carrier-protein]--UDP-N-acetylglucosamine O-acyltransferase (281 aa).

It belongs to the transferase hexapeptide repeat family. LpxA subfamily. As to quaternary structure, homotrimer.

The protein resides in the cytoplasm. The enzyme catalyses a (3R)-hydroxyacyl-[ACP] + UDP-N-acetyl-alpha-D-glucosamine = a UDP-3-O-[(3R)-3-hydroxyacyl]-N-acetyl-alpha-D-glucosamine + holo-[ACP]. Its pathway is glycolipid biosynthesis; lipid IV(A) biosynthesis; lipid IV(A) from (3R)-3-hydroxytetradecanoyl-[acyl-carrier-protein] and UDP-N-acetyl-alpha-D-glucosamine: step 1/6. Its function is as follows. Involved in the biosynthesis of lipid A, a phosphorylated glycolipid that anchors the lipopolysaccharide to the outer membrane of the cell. The chain is Acyl-[acyl-carrier-protein]--UDP-N-acetylglucosamine O-acyltransferase from Rickettsia bellii (strain OSU 85-389).